A 59-amino-acid chain; its full sequence is Large ribosomal subunit protein bL33 (59 aa).

The protein belongs to the bacterial ribosomal protein bL33 family.

This is Large ribosomal subunit protein bL33 from Prosthecochloris aestuarii (strain DSM 271 / SK 413).